A 143-amino-acid chain; its full sequence is Transcriptional regulator MraZ (143 aa).

SpoVT-AbrB domains follow at residues 5-47 (TYTP…PKEE) and 76-119 (ADEQ…DAQA).

Belongs to the MraZ family. In terms of assembly, forms oligomers.

The protein localises to the cytoplasm. It localises to the nucleoid. This chain is Transcriptional regulator MraZ, found in Corynebacterium glutamicum (strain R).